Consider the following 63-residue polypeptide: Large ribosomal subunit protein bL35 (63 aa).

Residues 1–15 (MPKIKTHRGAAKRFK) are compositionally biased toward basic residues. The tract at residues 1–26 (MPKIKTHRGAAKRFKQTAGGKWKGSH) is disordered.

Belongs to the bacterial ribosomal protein bL35 family.

The protein is Large ribosomal subunit protein bL35 of Pelotomaculum thermopropionicum (strain DSM 13744 / JCM 10971 / SI).